The sequence spans 193 residues: Dirigent protein 11 (193 aa).

The N-terminal stretch at Met1–Ser33 is a signal peptide. 2 N-linked (GlcNAc...) asparagine glycosylation sites follow: Asn78 and Asn136.

Belongs to the plant dirigent protein family. In terms of assembly, homodimer.

It localises to the secreted. It is found in the extracellular space. Its subcellular location is the apoplast. Functionally, dirigent proteins impart stereoselectivity on the phenoxy radical-coupling reaction, yielding optically active lignans from two molecules of coniferyl alcohol in the biosynthesis of lignans, flavonolignans, and alkaloids and thus plays a central role in plant secondary metabolism. This Arabidopsis thaliana (Mouse-ear cress) protein is Dirigent protein 11 (DIR11).